The following is a 145-amino-acid chain: Superoxide dismutase [Mn/Fe] (145 aa).

2 residues coordinate Fe(3+): His-10 and His-64. Positions 10 and 64 each coordinate Mn(2+). Residues 126-145 (TSTANQDTPISEGKKPILGL) are disordered.

Belongs to the iron/manganese superoxide dismutase family. Mn(2+) is required as a cofactor. Fe(3+) serves as cofactor.

It carries out the reaction 2 superoxide + 2 H(+) = H2O2 + O2. In terms of biological role, destroys superoxide anion radicals which are normally produced within the cells and which are toxic to biological systems. Catalyzes the dismutation of superoxide anion radicals into O2 and H2O2 by successive reduction and oxidation of the transition metal ion at the active site. The chain is Superoxide dismutase [Mn/Fe] (sodA) from Streptococcus oralis.